The primary structure comprises 471 residues: Trigger factor (471 aa).

In terms of domain architecture, PPIase FKBP-type spans 162–243 (GDFVVMDLVA…VSQVQEQELP (82 aa)). The segment at 436 to 471 (LRPDGTIGEPEDEIEAETEIEIEPAAETDTEADTEQ) is disordered. The segment covering 444-471 (EPEDEIEAETEIEIEPAAETDTEADTEQ) has biased composition (acidic residues).

This sequence belongs to the FKBP-type PPIase family. Tig subfamily.

Its subcellular location is the cytoplasm. The catalysed reaction is [protein]-peptidylproline (omega=180) = [protein]-peptidylproline (omega=0). Involved in protein export. Acts as a chaperone by maintaining the newly synthesized protein in an open conformation. Functions as a peptidyl-prolyl cis-trans isomerase. The sequence is that of Trigger factor from Nocardioides sp. (strain ATCC BAA-499 / JS614).